A 51-amino-acid chain; its full sequence is Protein SspM (51 aa).

It belongs to the alpha/beta-type SASP family.

This Mycolicibacterium phlei (Mycobacterium phlei) protein is Protein SspM (sspM).